The primary structure comprises 291 residues: Elongation factor Ts (291 aa).

Residues 78 to 81 (TDFV) form an involved in Mg(2+) ion dislocation from EF-Tu region.

This sequence belongs to the EF-Ts family.

It localises to the cytoplasm. Associates with the EF-Tu.GDP complex and induces the exchange of GDP to GTP. It remains bound to the aminoacyl-tRNA.EF-Tu.GTP complex up to the GTP hydrolysis stage on the ribosome. This chain is Elongation factor Ts, found in Ureaplasma parvum serovar 3 (strain ATCC 27815 / 27 / NCTC 11736).